The primary structure comprises 104 residues: Glutaredoxin (104 aa).

The region spanning 3-103 (MIKAQELVSS…PLLTEAGAVK (101 aa)) is the Glutaredoxin domain. An intrachain disulfide couples Cys23 to Cys26.

It belongs to the glutaredoxin family. CPYC subfamily.

The protein localises to the cytoplasm. Functionally, has a glutathione-disulfide oxidoreductase activity in the presence of NADPH and glutathione reductase. Reduces low molecular weight disulfides and proteins. The chain is Glutaredoxin from Vernicia fordii (Tung).